The chain runs to 323 residues: Breast cancer metastasis-suppressor 1-like protein-A (323 aa).

Residues 1–15 (MPVHSREKKESNHEE) are compositionally biased toward basic and acidic residues. A disordered region spans residues 1–52 (MPVHSREKKESNHEEMEVDFAEQEGSSSEDEDTESSSVSEDGESSEMDDEDC). Residues 16-51 (MEVDFAEQEGSSSEDEDTESSSVSEDGESSEMDDED) are compositionally biased toward acidic residues. Coiled coils occupy residues 50-81 (EDCERRRMECIDEMTNLEKQFTDLKDQLYKER) and 156-178 (QTELEEKIRRLEEDRHSIDITSE).

This sequence belongs to the BRMS1 family.

It is found in the nucleus. Functionally, involved in the histone deacetylase (HDAC1)-dependent transcriptional repression activity. In Danio rerio (Zebrafish), this protein is Breast cancer metastasis-suppressor 1-like protein-A (brms1la).